The following is a 579-amino-acid chain: Mitogen-activated protein kinase kinase kinase 7 (579 aa).

The interval Met-1 to Tyr-300 is interaction with MAPK8IP1. The region spanning Ile-36–Phe-291 is the Protein kinase domain. ATP contacts are provided by residues Val-42–Val-50 and Lys-63. Lys-72 is covalently cross-linked (Glycyl lysine isopeptide (Lys-Gly) (interchain with G-Cter in ubiquitin)). Asp-156 acts as the Proton acceptor in catalysis. Residue Lys-158 forms a Glycyl lysine isopeptide (Lys-Gly) (interchain with G-Cter in ubiquitin) linkage. Phosphothreonine; by autocatalysis is present on residues Thr-184 and Thr-187. The residue at position 192 (Ser-192) is a Phosphoserine; by autocatalysis. Lys-209 is covalently cross-linked (Glycyl lysine isopeptide (Lys-Gly) (interchain with G-Cter in ubiquitin)). Disordered regions lie at residues Pro-301–Val-338 and Lys-354–Asp-391. Residues Asp-306–Val-338 show a composition bias toward polar residues. A compositionally biased stretch (low complexity) spans Ser-361–Ser-375. Residues Ser-367, Ser-389, and Ser-412 each carry the phosphoserine modification. Positions Leu-416–Gln-425 are enriched in polar residues. The interval Leu-416–Asp-466 is disordered. Residues Val-426–Arg-436 show a composition bias toward low complexity. At Ser-428 the chain carries Phosphoserine.

The protein belongs to the protein kinase superfamily. STE Ser/Thr protein kinase family. MAP kinase kinase kinase subfamily. In terms of assembly, can form homodimer. Binds both upstream activators and downstream substrates in multimolecular complexes. Interacts with TAB1/MAP3K7IP1, TAB2/MAP3K7IP2 and TAB3/MAP3K7IP3. Identified in the TRIKA2 complex composed of MAP3K7/TAK1, TAB1/MAP3K7IP1 and TAB2/MAP3K7IP2. Interacts with PPM1L and PPM1B/PP2CB. Interaction with PP2A and PPP6C leads to its repressed activity. Interacts with TRAF6 and TAB1/MAP3K7IP1; during IL-1 signaling. Interacts with TAOK1 and TAOK2; interaction with TAOK2 interferes with MAP3K7 interaction with IKKA, thus preventing NF-kappa-B activation. Interacts with DYNC2I2 (via WD domains). Interacts with CYLD and RBCK1. Interacts with TGFBR1; induces MAP3K7/TAK1 activation by TRAF6. Interacts with MAPK8IP1 and SMAD6. Interacts with isoform 1 of VRK2. Interacts with DAB2; the interaction is induced by TGF-beta stimulation and may mediate TGF-beta stimulated JNK activation. Interacts with TRIM5. Part of a complex containing ITCH, NDFIP1 and MAP3K7. Interacts with PLEKHM1 (via N- and C-terminus). Interacts with TRIM8. Found in a complex with SH3RF1, RAC2, MAP2K7/MKK7, MAPK8IP1/JIP1, MAPK8/JNK1 and MAPK9/JNK2. Interacts with SASH1. Interacts with RIPK1. Mg(2+) serves as cofactor. Association with TAB1/MAP3K7IP1 promotes autophosphorylation and subsequent activation. Association with TAB2/MAP3K7IP2, itself associated with free unanchored Lys-63 polyubiquitin chain, promotes autophosphorylation and subsequent activation of MAP3K7. Dephosphorylation at Thr-187 by PP2A and PPP6C leads to inactivation. Post-translationally, 'Lys-48'-linked polyubiquitination at Lys-72 is induced by TNFalpha, and leads to proteasomal degradation. Undergoes 'Lys-48'-linked polyubiquitination catalyzed by ITCH. 'Lys-63'-linked polyubiquitination at Lys-158 by TRIM8 does not lead to proteasomal degradation but contributes to autophosphorylation and activation. Deubiquitinated by CYLD, a protease that selectively cleaves 'Lys-63'-linked ubiquitin chains.Deubiquitinated by USP19; leading to negative regulation of TNF-alpha- and IL-1beta-triggered NF-kappa-B activation.

It is found in the cytoplasm. The protein localises to the cell membrane. The catalysed reaction is L-seryl-[protein] + ATP = O-phospho-L-seryl-[protein] + ADP + H(+). It catalyses the reaction L-threonyl-[protein] + ATP = O-phospho-L-threonyl-[protein] + ADP + H(+). With respect to regulation, activated by pro-inflammatory cytokines and in response to physical and chemical stresses, including osmotic stress, oxidative stress, arsenic and ultraviolet light irradiation. Activated by 'Lys-63'-linked polyubiquitination and by autophosphorylation. Association with TAB1/MAP3K7IP1 and TAB2/MAP3K7IP2 promotes activation through autophosphorylation, whereas PPM1B/PP2CB, PP2A and PPP6C dephosphorylation leads to inactivation. Ceramides are also able to activate MAP3K7/TAK1. Serine/threonine kinase which acts as an essential component of the MAP kinase signal transduction pathway. Plays an important role in the cascades of cellular responses evoked by changes in the environment. Mediates signal transduction of TRAF6, various cytokines including interleukin-1 (IL-1), transforming growth factor-beta (TGFB), TGFB-related factors like BMP2 and BMP4, toll-like receptors (TLR), tumor necrosis factor receptor CD40 and B-cell receptor (BCR). Once activated, acts as an upstream activator of the MKK/JNK signal transduction cascade and the p38 MAPK signal transduction cascade through the phosphorylation and activation of several MAP kinase kinases like MAP2K1/MEK1, MAP2K3/MKK3, MAP2K6/MKK6 and MAP2K7/MKK7. These MAP2Ks in turn activate p38 MAPKs and c-jun N-terminal kinases (JNKs); both p38 MAPK and JNK pathways control the transcription factors activator protein-1 (AP-1). Independently of MAP2Ks and p38 MAPKs, acts as a key activator of NF-kappa-B by promoting activation of the I-kappa-B-kinase (IKK) core complex. Mechanistically, recruited to polyubiquitin chains of RIPK2 and IKBKG/NEMO via TAB2/MAP3K7IP2 and TAB3/MAP3K7IP3, and catalyzes phosphorylation and activation of IKBKB/IKKB component of the IKK complex, leading to NF-kappa-B activation. In osmotic stress signaling, plays a major role in the activation of MAPK8/JNK1, but not that of NF-kappa-B. Promotes TRIM5 capsid-specific restriction activity. Phosphorylates RIPK1 at 'Ser-321' which positively regulates RIPK1 interaction with RIPK3 to promote necroptosis but negatively regulates RIPK1 kinase activity and its interaction with FADD to mediate apoptosis. Phosphorylates STING1 in response to cGAMP-activation, promoting association between STEEP1 and STING1 and STING1 translocation to COPII vesicles. The polypeptide is Mitogen-activated protein kinase kinase kinase 7 (Map3k7) (Mus musculus (Mouse)).